The primary structure comprises 775 residues: MAFFFYFFFLLTLSSPSSSASSSNSLTYIVHVDHEAKPSIFPTHFHWYTSSLASLTSSPPSIIHTYDTVFHGFSARLTSQDASQLLDHPHVISVIPEQVRHLHTTRSPEFLGLRSTDKAGLLEESDFGSDLVIGVIDTGVWPERPSFDDRGLGPVPIKWKGQCIASQDFPESACNRKLVGARFFCGGYEATNGKMNETTEFRSPRDSDGHGTHTASISAGRYVFPASTLGYAHGVAAGMAPKARLAAYKVCWNSGCYDSDILAAFDTAVADGVDVISLSVGGVVVPYYLDAIAIGAFGAIDRGIFVSASAGNGGPGALTVTNVAPWMTTVGAGTIDRDFPANVKLGNGKMISGVSVYGGPGLDPGRMYPLVYGGSLLGGDGYSSSLCLEGSLDPNLVKGKIVLCDRGINSRATKGEIVRKNGGLGMIIANGVFDGEGLVADCHVLPATSVGASGGDEIRRYISESSKSRSSKHPTATIVFKGTRLGIRPAPVVASFSARGPNPETPEILKPDVIAPGLNILAAWPDRIGPSGVTSDNRRTEFNILSGTSMACPHVSGLAALLKAAHPDWSPAAIRSALITTAYTVDNSGEPMMDESTGNTSSVMDYGSGHVHPTKAMDPGLVYDITSYDYINFLCNSNYTRTNIVTITRRQADCDGARRAGHVGNLNYPSFSVVFQQYGESKMSTHFIRTVTNVGDSDSVYEIKIRPPRGTTVTVEPEKLSFRRVGQKLSFVVRVKTTEVKLSPGATNVETGHIVWSDGKRNVTSPLVVTLQQPL.

A signal peptide spans 1-19; sequence MAFFFYFFFLLTLSSPSSS. Residues 20–103 constitute a propeptide, activation peptide; the sequence is ASSSNSLTYI…VIPEQVRHLH (84 aa). Positions 27-103 constitute an Inhibitor I9 domain; it reads TYIVHVDHEA…VIPEQVRHLH (77 aa). The 511-residue stretch at 107–617 folds into the Peptidase S8 domain; the sequence is SPEFLGLRST…SGHVHPTKAM (511 aa). Asp137 acts as the Charge relay system in catalysis. Asn196 is a glycosylation site (N-linked (GlcNAc...) asparagine). The active-site Charge relay system is His210. The PA domain maps to 367 to 459; the sequence is MYPLVYGGSL…VGASGGDEIR (93 aa). Ser549 acts as the Charge relay system in catalysis. Residues Asn599, Asn638, and Asn762 are each glycosylated (N-linked (GlcNAc...) asparagine).

It belongs to the peptidase S8 family.

The protein resides in the secreted. The polypeptide is Subtilisin-like protease SBT1.5 (Arabidopsis thaliana (Mouse-ear cress)).